The chain runs to 47 residues: Delta-ctenitoxin-Asp2e (47 aa).

5 disulfides stabilise this stretch: Cys-3–Cys-17, Cys-10–Cys-23, Cys-14–Cys-46, Cys-16–Cys-31, and Cys-25–Cys-29.

In terms of tissue distribution, expressed by the venom gland.

It localises to the secreted. Its function is as follows. Inhibits the inactivation of voltage-gated sodium channels (Nav). In Ancylometes sp. (South American fishing spider), this protein is Delta-ctenitoxin-Asp2e.